Consider the following 96-residue polypeptide: Large ribosomal subunit protein eL21 (96 aa).

Positions 1-37 (MPSSNGPMTGTRDKLSNSPRERGMSPPQRAIQEYDEG) are disordered. Over residues 11–23 (TRDKLSNSPRERG) the composition is skewed to basic and acidic residues.

It belongs to the eukaryotic ribosomal protein eL21 family.

The chain is Large ribosomal subunit protein eL21 from Haloquadratum walsbyi (strain DSM 16790 / HBSQ001).